Reading from the N-terminus, the 193-residue chain is NADH-quinone oxidoreductase subunit B (193 aa).

Residues Cys-72, Cys-73, Cys-137, and Cys-167 each contribute to the [4Fe-4S] cluster site.

It belongs to the complex I 20 kDa subunit family. NDH-1 is composed of 14 different subunits. Subunits NuoB, C, D, E, F, and G constitute the peripheral sector of the complex. It depends on [4Fe-4S] cluster as a cofactor.

The protein resides in the cell inner membrane. It carries out the reaction a quinone + NADH + 5 H(+)(in) = a quinol + NAD(+) + 4 H(+)(out). Its function is as follows. NDH-1 shuttles electrons from NADH, via FMN and iron-sulfur (Fe-S) centers, to quinones in the respiratory chain. The immediate electron acceptor for the enzyme in this species is believed to be ubiquinone. Couples the redox reaction to proton translocation (for every two electrons transferred, four hydrogen ions are translocated across the cytoplasmic membrane), and thus conserves the redox energy in a proton gradient. This is NADH-quinone oxidoreductase subunit B from Phenylobacterium zucineum (strain HLK1).